The primary structure comprises 306 residues: Glutathione transport system permease protein GsiC (306 aa).

Residues 1–8 (MLNYVIKR) are Cytoplasmic-facing. A helical membrane pass occupies residues 9–29 (LLGLIPTLFIVSVLVFLFVHM). The Periplasmic portion of the chain corresponds to 30–102 (LPGDPARLIA…SRFMPTLWLT (73 aa)). In terms of domain architecture, ABC transmembrane type-1 spans 95–292 (FMPTLWLTIT…LEFILINLVV (198 aa)). The helical transmembrane segment at 103-123 (ITSMVWAVIFGMAAGIIAAVW) threads the bilayer. The Cytoplasmic segment spans residues 124–134 (RNRWPDRLSMT). The helical transmembrane segment at 135–155 (IAVSGISFPAFALGMFLIQVF) threads the bilayer. Over 156 to 168 (SVELGWLPTVGAD) the chain is Periplasmic. Residues 169 to 189 (SWQHYILPSLTLGAAVAAVMA) form a helical membrane-spanning segment. The Cytoplasmic segment spans residues 190 to 228 (RFTRASFVDVLSEDYMRTARAKGVSETWVVLKHGLRNAM). Residues 229–249 (IPVVTMMGLQFGFLLGGSIVV) form a helical membrane-spanning segment. The Periplasmic portion of the chain corresponds to 250–277 (EKVFNWPGLGRLLVDSVEMRDYPVIQAE). Residues 278 to 298 (ILLFSLEFILINLVVDVLYAA) traverse the membrane as a helical segment. Residues 299 to 306 (INPAIRYK) are Cytoplasmic-facing.

Belongs to the binding-protein-dependent transport system permease family. The complex is composed of two ATP-binding proteins (GsiA), two transmembrane proteins (GsiC and GsiD) and a solute-binding protein (GsiB).

The protein resides in the cell inner membrane. Part of the ABC transporter complex GsiABCD involved in glutathione import. Probably responsible for the translocation of the substrate across the membrane. This chain is Glutathione transport system permease protein GsiC, found in Shigella flexneri serotype 5b (strain 8401).